The primary structure comprises 258 residues: Snake venom serine protease 5 (258 aa).

An N-terminal signal peptide occupies residues 1 to 18 (MVLIRVLANLLILQLSYA). A propeptide spanning residues 19–24 (QKSSEL) is cleaved from the precursor. Residues 25–249 (VVGGRPCNIN…HLDWIQNIIA (225 aa)) enclose the Peptidase S1 domain. Cystine bridges form between C31–C163, C50–C66, C98–C256, C142–C210, C174–C189, and C200–C225. N44 carries an N-linked (GlcNAc...) asparagine glycan. The active-site Charge relay system is H65. Residue N103 is glycosylated (N-linked (GlcNAc...) asparagine). D110 (charge relay system) is an active-site residue. N121, N122, N154, and N170 each carry an N-linked (GlcNAc...) asparagine glycan. Residue S204 is the Charge relay system of the active site. N251 is a glycosylation site (N-linked (GlcNAc...) asparagine).

This sequence belongs to the peptidase S1 family. Snake venom subfamily. In terms of assembly, monomer. Expressed by the venom gland.

Its subcellular location is the secreted. In terms of biological role, snake venom serine protease that may act in the hemostasis system of the prey. The sequence is that of Snake venom serine protease 5 from Trimeresurus stejnegeri (Chinese green tree viper).